The following is a 425-amino-acid chain: AFP homolog 2 (425 aa).

2 disordered regions span residues 1-207 and 288-327; these read MDDD…SGTE and PFAG…DNSN. The tract at residues 7–17 is necessary and sufficient for the interaction with TOPLESS; the sequence is LELSLGLSCGG. Low complexity predominate over residues 20–34; it reads GKAKGNNNNNAGSSS. The span at 37–54 shows a compositional bias: basic and acidic residues; that stretch reads YRAEGGDRSAKVIDDFKN. Low complexity predominate over residues 66-81; sequence PSSGSQRSDSGQQPPQ. Over residues 124–140 the composition is skewed to basic and acidic residues; that stretch reads NDDKKKEKDSSHVDMHE. Polar residues-rich tracts occupy residues 146-158, 185-197, and 288-299; these read SHVS…GSTA, TDTN…TGQR, and PFAGRVPSNSAT. The interval 322–425 is necessary and sufficient for the interaction with the JAZ proteins; the sequence is TGDNSNLNTA…MGMTAASAHT (104 aa).

It belongs to the Ninja family. Component of a complex at least composed of TOPLESS, TPR2, TPR3, TIFY4B/PPD2, MYC3/ATR2 and TIFY3B/JAZ12. Interacts (via C-terminus) with TIFY10A/JAZ1; TIFY10B/JAZ2; TIFY6B/JAZ3; TIFY6A/JAZ4; TIFY11A/JAZ5; TIFY11B/JAZ6; TIFY7/JAZ9; TIFY9/JAZ10; TIFY3A/JAZ11; TIFY3B/JAZ12; TIFY4A/PPD1; TIFY4B/PPD2 and TIFY8 (via TIFY domain). Interacts with TOPLESS. Interacts with PAT1H1.

It localises to the nucleus. Acts as a transcriptional repressor. Negative regulator of jasmonate responses. Connects the JAZ proteins and the non-JAZ protein TIFY8 with the TOPLESS corepressors. This is AFP homolog 2 from Arabidopsis thaliana (Mouse-ear cress).